Here is a 392-residue protein sequence, read N- to C-terminus: O-phospho-L-seryl-tRNA:Cys-tRNA synthase 2 (392 aa).

Pyridoxal 5'-phosphate-binding positions include 85–86, Asn190, and 213–215; these read AR and SGH. Lys216 carries the N6-(pyridoxal phosphate)lysine modification.

This sequence belongs to the SepCysS family. As to quaternary structure, homodimer. Interacts with SepRS. Pyridoxal 5'-phosphate is required as a cofactor.

The enzyme catalyses O-phospho-L-seryl-tRNA(Cys) + hydrogen sulfide + H(+) = L-cysteinyl-tRNA(Cys) + phosphate. In terms of biological role, converts O-phospho-L-seryl-tRNA(Cys) (Sep-tRNA(Cys)) to L-cysteinyl-tRNA(Cys) (Cys-tRNA(Cys)). The protein is O-phospho-L-seryl-tRNA:Cys-tRNA synthase 2 of Methanocorpusculum labreanum (strain ATCC 43576 / DSM 4855 / Z).